Reading from the N-terminus, the 382-residue chain is S-adenosylmethionine synthase (382 aa).

Histidine 16 is an ATP binding site. Mg(2+) is bound at residue aspartate 18. Glutamate 44 contributes to the K(+) binding site. The L-methionine site is built by glutamate 57 and glutamine 100. The flexible loop stretch occupies residues 100–110 (QSADIAIGVDE). ATP-binding positions include 165-167 (DAK), aspartate 240, 246-247 (RK), alanine 263, and lysine 267. Aspartate 240 contacts L-methionine. Lysine 271 serves as a coordination point for L-methionine.

The protein belongs to the AdoMet synthase family. As to quaternary structure, homotetramer; dimer of dimers. The cofactor is Mg(2+). K(+) serves as cofactor.

It localises to the cytoplasm. It carries out the reaction L-methionine + ATP + H2O = S-adenosyl-L-methionine + phosphate + diphosphate. It participates in amino-acid biosynthesis; S-adenosyl-L-methionine biosynthesis; S-adenosyl-L-methionine from L-methionine: step 1/1. Its function is as follows. Catalyzes the formation of S-adenosylmethionine (AdoMet) from methionine and ATP. The overall synthetic reaction is composed of two sequential steps, AdoMet formation and the subsequent tripolyphosphate hydrolysis which occurs prior to release of AdoMet from the enzyme. The sequence is that of S-adenosylmethionine synthase from Alcanivorax borkumensis (strain ATCC 700651 / DSM 11573 / NCIMB 13689 / SK2).